We begin with the raw amino-acid sequence, 195 residues long: uncharacterized protein (195 aa).

The tract at residues 143–195 (NKLIETINTNRTNNTDNKSTKSKKQTETKKSLRTNKIVKQPINKSKKNIREEY) is disordered. Low complexity predominate over residues 148–159 (TINTNRTNNTDN).

This is an uncharacterized protein from Acanthamoeba polyphaga (Amoeba).